Reading from the N-terminus, the 25-residue chain is Caerin 2.1 (25 aa).

Expressed by the skin dorsal glands.

Its subcellular location is the secreted. Antibacterial peptide with narrow spectrum of activity. Active against the Gram-negative bacterium P.multocida (MIC=25 ug/ml). Inhibits the formation of NO by neuronal nitric oxide synthase with an IC(50) of 9 ug/ml. The protein is Caerin 2.1 of Litoria peronii (Emerald spotted tree frog).